We begin with the raw amino-acid sequence, 340 residues long: Dual specificity protein phosphatase 12 (340 aa).

Methionine 1 carries the post-translational modification N-acetylmethionine. Residues 26-171 (QMLEVQPGLY…LKLYQAMGYE (146 aa)) form the Tyrosine-protein phosphatase domain. Residue cysteine 115 is the Phosphocysteine intermediate of the active site. Residue 116–121 (HAGVSR) coordinates substrate. Serine 335 carries the phosphoserine modification.

Belongs to the protein-tyrosine phosphatase family. Non-receptor class dual specificity subfamily. Monomer. Requires Zn(2+) as cofactor. Ubiquitous, highest expression in spleen, testis, ovary, and peripheral blood leukocytes and lower expression in liver and lung.

The protein resides in the nucleus. It is found in the cytoplasm. Its subcellular location is the cytosol. It carries out the reaction O-phospho-L-tyrosyl-[protein] + H2O = L-tyrosyl-[protein] + phosphate. It catalyses the reaction O-phospho-L-seryl-[protein] + H2O = L-seryl-[protein] + phosphate. The enzyme catalyses O-phospho-L-threonyl-[protein] + H2O = L-threonyl-[protein] + phosphate. Functionally, dual specificity phosphatase; can dephosphorylate both phosphotyrosine and phosphoserine or phosphothreonine residues. Can dephosphorylate glucokinase (in vitro). Has phosphatase activity with the synthetic substrate 6,8-difluoro-4-methylumbelliferyl phosphate and other in vitro substrates. This Homo sapiens (Human) protein is Dual specificity protein phosphatase 12 (DUSP12).